Reading from the N-terminus, the 1298-residue chain is Phosphoribosylformylglycinamidine synthase (1298 aa).

A disordered region spans residues 303-327; sequence FPGAATGSGGEIRDEGATGRGAKPK. Residues 305–316, 384–386, and Ala-676 each bind ATP; these read GAATGSGGEIRD and TGY. Residues Asp-677, Glu-716, Asn-720, and Asp-884 each coordinate Mg(2+). Ser-886 provides a ligand contact to ATP. The 254-residue stretch at 1045–1298 folds into the Glutamine amidotransferase type-1 domain; that stretch reads VAVLREQGVN…MFRNARAWVN (254 aa). Cys-1138 functions as the Nucleophile in the catalytic mechanism. Residues His-1263 and Glu-1265 contribute to the active site.

It in the N-terminal section; belongs to the FGAMS family. As to quaternary structure, monomer.

Its subcellular location is the cytoplasm. It carries out the reaction N(2)-formyl-N(1)-(5-phospho-beta-D-ribosyl)glycinamide + L-glutamine + ATP + H2O = 2-formamido-N(1)-(5-O-phospho-beta-D-ribosyl)acetamidine + L-glutamate + ADP + phosphate + H(+). Its pathway is purine metabolism; IMP biosynthesis via de novo pathway; 5-amino-1-(5-phospho-D-ribosyl)imidazole from N(2)-formyl-N(1)-(5-phospho-D-ribosyl)glycinamide: step 1/2. Functionally, phosphoribosylformylglycinamidine synthase involved in the purines biosynthetic pathway. Catalyzes the ATP-dependent conversion of formylglycinamide ribonucleotide (FGAR) and glutamine to yield formylglycinamidine ribonucleotide (FGAM) and glutamate. This chain is Phosphoribosylformylglycinamidine synthase, found in Pseudomonas syringae pv. tomato (strain ATCC BAA-871 / DC3000).